A 421-amino-acid chain; its full sequence is Fumarylacetoacetase (421 aa).

Asp-131 contributes to the Ca(2+) binding site. His-138 acts as the Proton acceptor in catalysis. Arg-147 is a binding site for substrate. The Ca(2+) site is built by Glu-204, Glu-206, and Asp-238. Asp-238 contacts Mg(2+). Substrate is bound by residues Gln-245 and Tyr-249. 2 residues coordinate Mg(2+): Lys-258 and Thr-262. A substrate-binding site is contributed by Thr-355.

The protein belongs to the FAH family. Ca(2+) is required as a cofactor. Requires Mg(2+) as cofactor.

The catalysed reaction is 4-fumarylacetoacetate + H2O = acetoacetate + fumarate + H(+). It participates in amino-acid degradation; L-phenylalanine degradation; acetoacetate and fumarate from L-phenylalanine: step 6/6. Functionally, converts fumarylacetoacetate to acetoacetate and fumarate. Involved in tyrosine catabolic pathway. Catalyzes the final step in the tyrosine degradation pathway. This is Fumarylacetoacetase from Arabidopsis thaliana (Mouse-ear cress).